Reading from the N-terminus, the 217-residue chain is 3,4-dihydroxy-2-butanone 4-phosphate synthase (217 aa).

D-ribulose 5-phosphate contacts are provided by residues 37–38 (RE), Asp-42, 150–154 (RGGHT), and Glu-174. Glu-38 is a Mg(2+) binding site. A Mg(2+)-binding site is contributed by His-153.

Belongs to the DHBP synthase family. Homodimer. Requires Mg(2+) as cofactor. Mn(2+) serves as cofactor.

It carries out the reaction D-ribulose 5-phosphate = (2S)-2-hydroxy-3-oxobutyl phosphate + formate + H(+). It participates in cofactor biosynthesis; riboflavin biosynthesis; 2-hydroxy-3-oxobutyl phosphate from D-ribulose 5-phosphate: step 1/1. Catalyzes the conversion of D-ribulose 5-phosphate to formate and 3,4-dihydroxy-2-butanone 4-phosphate. This Citrobacter koseri (strain ATCC BAA-895 / CDC 4225-83 / SGSC4696) protein is 3,4-dihydroxy-2-butanone 4-phosphate synthase.